The chain runs to 272 residues: Shikimate dehydrogenase (NADP(+)) (272 aa).

Residues 14–16 (SKS) and Thr-61 contribute to the shikimate site. Catalysis depends on Lys-65, which acts as the Proton acceptor. Residue Glu-77 coordinates NADP(+). Shikimate-binding residues include Asn-86 and Asp-102. Residues 126-130 (GAGGA), 149-154 (NRTFSR), and Met-213 each bind NADP(+). Shikimate is bound at residue Tyr-215. Gly-237 lines the NADP(+) pocket.

It belongs to the shikimate dehydrogenase family. Homodimer.

The enzyme catalyses shikimate + NADP(+) = 3-dehydroshikimate + NADPH + H(+). It functions in the pathway metabolic intermediate biosynthesis; chorismate biosynthesis; chorismate from D-erythrose 4-phosphate and phosphoenolpyruvate: step 4/7. In terms of biological role, involved in the biosynthesis of the chorismate, which leads to the biosynthesis of aromatic amino acids. Catalyzes the reversible NADPH linked reduction of 3-dehydroshikimate (DHSA) to yield shikimate (SA). The sequence is that of Shikimate dehydrogenase (NADP(+)) from Photorhabdus laumondii subsp. laumondii (strain DSM 15139 / CIP 105565 / TT01) (Photorhabdus luminescens subsp. laumondii).